The following is a 71-amino-acid chain: Translation initiation factor IF-1 (71 aa).

Residues 1–71 (MSKQEMLSFS…LTKGRITFRG (71 aa)) enclose the S1-like domain.

This sequence belongs to the IF-1 family. As to quaternary structure, component of the 30S ribosomal translation pre-initiation complex which assembles on the 30S ribosome in the order IF-2 and IF-3, IF-1 and N-formylmethionyl-tRNA(fMet); mRNA recruitment can occur at any time during PIC assembly.

The protein resides in the cytoplasm. One of the essential components for the initiation of protein synthesis. Stabilizes the binding of IF-2 and IF-3 on the 30S subunit to which N-formylmethionyl-tRNA(fMet) subsequently binds. Helps modulate mRNA selection, yielding the 30S pre-initiation complex (PIC). Upon addition of the 50S ribosomal subunit IF-1, IF-2 and IF-3 are released leaving the mature 70S translation initiation complex. This is Translation initiation factor IF-1 from Pelagibacter ubique (strain HTCC1062).